We begin with the raw amino-acid sequence, 242 residues long: Probable proteasome subunit alpha type-7 (242 aa).

This sequence belongs to the peptidase T1A family. The 26S proteasome consists of a 20S proteasome core and two 19S regulatory subunits. The 20S proteasome core is composed of 28 subunits that are arranged in four stacked rings, resulting in a barrel-shaped structure. The two end rings are each formed by seven alpha subunits, and the two central rings are each formed by seven beta subunits. The catalytic chamber with the active sites is on the inside of the barrel.

It localises to the cytoplasm. The protein resides in the nucleus. Its function is as follows. The proteasome degrades poly-ubiquitinated proteins in the cytoplasm and in the nucleus. It is essential for the regulated turnover of proteins and for the removal of misfolded proteins. The proteasome is a multicatalytic proteinase complex that is characterized by its ability to cleave peptides with Arg, Phe, Tyr, Leu, and Glu adjacent to the leaving group at neutral or slightly basic pH. It has an ATP-dependent proteolytic activity. This chain is Probable proteasome subunit alpha type-7 (PRE10), found in Encephalitozoon cuniculi (strain GB-M1) (Microsporidian parasite).